The following is an 810-amino-acid chain: Zinc finger CCCH domain-containing protein 11A (810 aa).

C3H1-type zinc fingers lie at residues Pro2–Ala29, Ile31–Ile57, and Lys60–Arg86. Ser108 carries the phosphoserine modification. Residues Lys114 and Lys124 each participate in a glycyl lysine isopeptide (Lys-Gly) (interchain with G-Cter in SUMO2) cross-link. Residue Ser132 is modified to Phosphoserine. 4 disordered regions span residues Met139–Val194, Lys223–Arg258, Gly285–Asn351, and Glu367–Ile432. Lys140 is covalently cross-linked (Glycyl lysine isopeptide (Lys-Gly) (interchain with G-Cter in SUMO2)). Residues Ser149 and Ser171 each carry the phosphoserine modification. Residues Ala160–Asp175 show a composition bias toward acidic residues. Ser290 bears the Phosphoserine mark. Basic and acidic residues-rich tracts occupy residues Lys309–Pro322 and Glu367–Asp390. The residue at position 321 (Thr321) is a Phosphothreonine. A coiled-coil region spans residues Glu362–Gln423. Ser370 carries the post-translational modification Phosphoserine. Residues Ser391 to Arg402 show a composition bias toward polar residues. Positions Gln417–Ile432 are enriched in basic and acidic residues. Lys478 is covalently cross-linked (Glycyl lysine isopeptide (Lys-Gly) (interchain with G-Cter in SUMO2)). A disordered region spans residues Ala482 to Val549. The span at Gln486–Gln498 shows a compositional bias: low complexity. Lys619 participates in a covalent cross-link: Glycyl lysine isopeptide (Lys-Gly) (interchain with G-Cter in SUMO2). Positions Thr715–Ser768 are disordered. Residues Pro729–Ser748 show a composition bias toward low complexity. Positions Gln749–Thr762 are enriched in polar residues.

Interacts with TREX complex components THOC2, DDX39 and POLDIP3; the interactions are ATP-dependent. Interacts with PABPN1; this interaction retains ZC3H11A in nuclear speckles. Interacts with KPNA3.

The protein resides in the nucleus. Its subcellular location is the nucleus speckle. In terms of biological role, through its association with TREX complex components, may participate in the export and post-transcriptional coordination of selected mRNA transcripts, including those required to maintain the metabolic processes in embryonic cells. Binds RNA. Functionally, (Microbial infection) Plays a role in efficient growth of several nuclear-replicating viruses such as HIV-1, influenza virus or herpes simplex virus 1/HHV-1. Required for efficient viral mRNA export. May be required for proper polyadenylation of adenovirus type 5/HAdV-5 capsid mRNA. This Homo sapiens (Human) protein is Zinc finger CCCH domain-containing protein 11A (ZC3H11A).